The sequence spans 407 residues: MDYNLALDTALNRLHTEGRYRTFIDIERRKGAFPKAMWRKPDGSEKEITVWCGNDYLGMGQHPVVLGAMHEALDSTGAGSGGTRNISGTTLYHKRLEAELADLHGKEAALVFSSAYIANDATLSTLPQLIPGLVIVSDKLNHASMIEGIRRSGTEKHIFKHNDLDDLRRILTSIGKDRPILVAFESVYSMDGDFGRIEEICDIADEFGALKYIDEVHAVGMYGPRGGGVAERDGLMDRIDIINGTLGKAYGVFGGYIAASSKMCDAVRSYAPGFIFSTSLPPVVAAGAAASVRHLKGDVELREKHQTQARILKMRLKGLGLPIIDHGSHIVPVHVGDPVHCKMISDMLLEHFGIYVQPINFPTVPRGTERLRFTPSPVHDSGMIDHLVKAMDVLWQHCALNRAEVVA.

The substrate site is built by Arg-21, Ser-137, and Lys-156. Residues Ser-189, His-217, and Thr-245 each contribute to the pyridoxal 5'-phosphate site. Lys-248 is an active-site residue. Residue Lys-248 is modified to N6-(pyridoxal phosphate)lysine. Positions 277 and 278 each coordinate pyridoxal 5'-phosphate. Thr-363 serves as a coordination point for substrate.

It belongs to the class-II pyridoxal-phosphate-dependent aminotransferase family. As to quaternary structure, homodimer. Requires pyridoxal 5'-phosphate as cofactor.

It catalyses the reaction succinyl-CoA + glycine + H(+) = 5-aminolevulinate + CO2 + CoA. It participates in porphyrin-containing compound metabolism; protoporphyrin-IX biosynthesis; 5-aminolevulinate from glycine: step 1/1. The protein is 5-aminolevulinate synthase 1 (hemA) of Cereibacter sphaeroides (strain ATCC 17023 / DSM 158 / JCM 6121 / CCUG 31486 / LMG 2827 / NBRC 12203 / NCIMB 8253 / ATH 2.4.1.) (Rhodobacter sphaeroides).